Consider the following 435-residue polypeptide: Legumain (435 aa).

The signal sequence occupies residues M1–A17. Residue N93 is glycosylated (N-linked (GlcNAc...) asparagine). H150 is an active-site residue. N-linked (GlcNAc...) asparagine glycosylation is present at N169. C191 serves as the catalytic Nucleophile. 3 N-linked (GlcNAc...) asparagine glycosylation sites follow: N215, N265, and N274. The propeptide occupies N326–Y435. Intrachain disulfides connect C380-C414 and C392-C431.

Belongs to the peptidase C13 family. Homodimer before autocatalytic removal of the propeptide. Monomer after autocatalytic processing. May interact with integrins. Activated by autocatalytic processing at pH 4. As to expression, detected in kidney cortex (at protein level).

It localises to the lysosome. It catalyses the reaction Hydrolysis of proteins and small molecule substrates at -Asn-|-Xaa- bonds.. Its function is as follows. Has a strict specificity for hydrolysis of asparaginyl bonds. Can also cleave aspartyl bonds slowly, especially under acidic conditions. Involved in the processing of proteins for MHC class II antigen presentation in the lysosomal/endosomal system. Also involved in MHC class I antigen presentation in cross-presenting dendritic cells by mediating cleavage and maturation of Perforin-2 (MPEG1), thereby promoting antigen translocation in the cytosol. Required for normal lysosomal protein degradation in renal proximal tubules. Required for normal degradation of internalized EGFR. Plays a role in the regulation of cell proliferation via its role in EGFR degradation. The polypeptide is Legumain (Lgmn) (Rattus norvegicus (Rat)).